Reading from the N-terminus, the 194-residue chain is Fe/S biogenesis protein NfuA (194 aa).

The [4Fe-4S] cluster site is built by cysteine 151 and cysteine 154.

The protein belongs to the NfuA family. In terms of assembly, homodimer. It depends on [4Fe-4S] cluster as a cofactor.

Functionally, involved in iron-sulfur cluster biogenesis. Binds a 4Fe-4S cluster, can transfer this cluster to apoproteins, and thereby intervenes in the maturation of Fe/S proteins. Could also act as a scaffold/chaperone for damaged Fe/S proteins. This Actinobacillus succinogenes (strain ATCC 55618 / DSM 22257 / CCUG 43843 / 130Z) protein is Fe/S biogenesis protein NfuA.